Reading from the N-terminus, the 181-residue chain is MICGIDEVGRGCIFGPILSAAVVFKKKPSFIKELDDSKKLKKEKREYLSSLILKNSYYAFAEISNITIEKINIHNASLLAMQTAYENLKLNCSLVLVDGKFVPKITAKNVKAIIKGDSIIDEIKAASIIAKVKRDKLMDEYDKIYPLYLLKKNKGYPTKEHKNAIKKYGVLSLHRKNFKLI.

Residues 1 to 181 (MICGIDEVGR…SLHRKNFKLI (181 aa)) form the RNase H type-2 domain. Positions 6, 7, and 98 each coordinate a divalent metal cation.

The protein belongs to the RNase HII family. Mn(2+) is required as a cofactor. Mg(2+) serves as cofactor.

It is found in the cytoplasm. The catalysed reaction is Endonucleolytic cleavage to 5'-phosphomonoester.. Functionally, endonuclease that specifically degrades the RNA of RNA-DNA hybrids. This is Ribonuclease HII from Borreliella burgdorferi (strain ZS7) (Borrelia burgdorferi).